Here is a 656-residue protein sequence, read N- to C-terminus: tRNA(Met) cytidine acetyltransferase TmcA (656 aa).

ATP is bound by residues glutamine 145, 167 to 176 (GRGKSALLGM), and arginine 291. One can recognise an N-acetyltransferase domain in the interval 368 to 542 (SEGKYNRQFF…SGCYSAIALK (175 aa)). Residues 474-476 (IAV), 481-487 (QQKGIGQ), and glutamate 510 each bind acetyl-CoA.

The protein belongs to the RNA cytidine acetyltransferase family. TmcA subfamily.

Its subcellular location is the cytoplasm. The catalysed reaction is cytidine(34) in elongator tRNA(Met) + acetyl-CoA + ATP + H2O = N(4)-acetylcytidine(34) in elongator tRNA(Met) + ADP + phosphate + CoA + H(+). In terms of biological role, catalyzes the formation of N(4)-acetylcytidine (ac(4)C) at the wobble position of tRNA(Met), by using acetyl-CoA as an acetyl donor and ATP (or GTP). This chain is tRNA(Met) cytidine acetyltransferase TmcA, found in Haemophilus influenzae (strain ATCC 51907 / DSM 11121 / KW20 / Rd).